Here is a 583-residue protein sequence, read N- to C-terminus: Ankyrin repeat-containing protein NPR4 (583 aa).

ANK repeat units follow at residues 68 to 97, 119 to 148, 154 to 183, 188 to 218, 223 to 252, 257 to 286, and 291 to 321; these read HNDT…AAVA, AGET…AEGV, SGYD…LLAK, ANTS…GLVE, NGKN…QLAR, KGQT…AIVM, and NGNT…HVNA. Transmembrane regions (helical) follow at residues 414 to 434, 452 to 472, 492 to 512, and 518 to 538; these read VTVV…TVPG, IFFI…VVQI, LMWL…YIVL, and WAAL…LGTM.

It localises to the cell membrane. Its function is as follows. Involved in salt stress tolerance. The sequence is that of Ankyrin repeat-containing protein NPR4 from Oryza sativa subsp. japonica (Rice).